The chain runs to 460 residues: A-type ATP synthase subunit B (460 aa).

Belongs to the ATPase alpha/beta chains family. Has multiple subunits with at least A(3), B(3), C, D, E, F, H, I and proteolipid K(x).

Its subcellular location is the cell membrane. Functionally, component of the A-type ATP synthase that produces ATP from ADP in the presence of a proton gradient across the membrane. The B chain is a regulatory subunit. The protein is A-type ATP synthase subunit B of Thermofilum pendens (strain DSM 2475 / Hrk 5).